A 410-amino-acid chain; its full sequence is Tryptophan synthase beta chain (410 aa).

K100 bears the N6-(pyridoxal phosphate)lysine mark.

The protein belongs to the TrpB family. Tetramer of two alpha and two beta chains. Pyridoxal 5'-phosphate serves as cofactor.

The enzyme catalyses (1S,2R)-1-C-(indol-3-yl)glycerol 3-phosphate + L-serine = D-glyceraldehyde 3-phosphate + L-tryptophan + H2O. Its pathway is amino-acid biosynthesis; L-tryptophan biosynthesis; L-tryptophan from chorismate: step 5/5. Its function is as follows. The beta subunit is responsible for the synthesis of L-tryptophan from indole and L-serine. This chain is Tryptophan synthase beta chain, found in Pyrobaculum aerophilum (strain ATCC 51768 / DSM 7523 / JCM 9630 / CIP 104966 / NBRC 100827 / IM2).